A 273-amino-acid chain; its full sequence is Bis(5'-nucleosyl)-tetraphosphatase, symmetrical (273 aa).

The protein belongs to the Ap4A hydrolase family.

It catalyses the reaction P(1),P(4)-bis(5'-adenosyl) tetraphosphate + H2O = 2 ADP + 2 H(+). In terms of biological role, hydrolyzes diadenosine 5',5'''-P1,P4-tetraphosphate to yield ADP. This chain is Bis(5'-nucleosyl)-tetraphosphatase, symmetrical, found in Histophilus somni (strain 2336) (Haemophilus somnus).